A 410-amino-acid chain; its full sequence is Structural protein ORF142 (410 aa).

Disordered stretches follow at residues 1-24 and 156-197; these read MNQN…HVDT and PTST…VNIS. Residues 161–188 show a composition bias toward acidic residues; the sequence is DDNDNENRSDDDDDDDDYRNDREEVEDS.

Its subcellular location is the virion. This Trichoplusia ni ascovirus 2c (TnAV-2c) protein is Structural protein ORF142.